The chain runs to 315 residues: 4-hydroxy-3-methylbut-2-enyl diphosphate reductase (315 aa).

Position 12 (C12) interacts with [4Fe-4S] cluster. Positions 41 and 74 each coordinate (2E)-4-hydroxy-3-methylbut-2-enyl diphosphate. Dimethylallyl diphosphate contacts are provided by H41 and H74. Positions 41 and 74 each coordinate isopentenyl diphosphate. C96 provides a ligand contact to [4Fe-4S] cluster. H124 provides a ligand contact to (2E)-4-hydroxy-3-methylbut-2-enyl diphosphate. H124 is a dimethylallyl diphosphate binding site. H124 contacts isopentenyl diphosphate. The Proton donor role is filled by E126. T168 is a binding site for (2E)-4-hydroxy-3-methylbut-2-enyl diphosphate. C198 contributes to the [4Fe-4S] cluster binding site. (2E)-4-hydroxy-3-methylbut-2-enyl diphosphate is bound by residues S226, S227, N228, and S270. Residues S226, S227, N228, and S270 each contribute to the dimethylallyl diphosphate site. Isopentenyl diphosphate contacts are provided by S226, S227, N228, and S270.

It belongs to the IspH family. [4Fe-4S] cluster is required as a cofactor.

It carries out the reaction isopentenyl diphosphate + 2 oxidized [2Fe-2S]-[ferredoxin] + H2O = (2E)-4-hydroxy-3-methylbut-2-enyl diphosphate + 2 reduced [2Fe-2S]-[ferredoxin] + 2 H(+). It catalyses the reaction dimethylallyl diphosphate + 2 oxidized [2Fe-2S]-[ferredoxin] + H2O = (2E)-4-hydroxy-3-methylbut-2-enyl diphosphate + 2 reduced [2Fe-2S]-[ferredoxin] + 2 H(+). The protein operates within isoprenoid biosynthesis; dimethylallyl diphosphate biosynthesis; dimethylallyl diphosphate from (2E)-4-hydroxy-3-methylbutenyl diphosphate: step 1/1. It functions in the pathway isoprenoid biosynthesis; isopentenyl diphosphate biosynthesis via DXP pathway; isopentenyl diphosphate from 1-deoxy-D-xylulose 5-phosphate: step 6/6. Functionally, catalyzes the conversion of 1-hydroxy-2-methyl-2-(E)-butenyl 4-diphosphate (HMBPP) into a mixture of isopentenyl diphosphate (IPP) and dimethylallyl diphosphate (DMAPP). Acts in the terminal step of the DOXP/MEP pathway for isoprenoid precursor biosynthesis. This chain is 4-hydroxy-3-methylbut-2-enyl diphosphate reductase, found in Pseudomonas putida (strain W619).